Here is a 129-residue protein sequence, read N- to C-terminus: Small ribosomal subunit protein uS11 (129 aa).

The protein belongs to the universal ribosomal protein uS11 family. As to quaternary structure, part of the 30S ribosomal subunit. Interacts with proteins S7 and S18. Binds to IF-3.

Its function is as follows. Located on the platform of the 30S subunit, it bridges several disparate RNA helices of the 16S rRNA. Forms part of the Shine-Dalgarno cleft in the 70S ribosome. In Pseudomonas fluorescens (strain ATCC BAA-477 / NRRL B-23932 / Pf-5), this protein is Small ribosomal subunit protein uS11.